The following is a 472-amino-acid chain: Tubulin gamma chain (472 aa).

142-148 contributes to the GTP binding site; sequence AGGTGSG.

The protein belongs to the tubulin family. Component of the gamma-tubulin small complex (gamma-TuSC) composed of tubulin gamma chain, gamma-tubulin complex protein 2 (GCP2) and gamma-tubulin complex protein 3 (GCP3). Interacts with GCP2 and GCP3. Interacts with EB1.

The protein localises to the cytoplasm. The protein resides in the cytoskeleton. It localises to the flagellum axoneme. Its subcellular location is the flagellum basal body. It is found in the spindle. The protein localises to the microtubule organizing center. Its function is as follows. Tubulin is the major constituent of microtubules (Potential). The gamma chain is found at microtubule organizing centers (MTOC) such as the centrosome. Component of the gamma-tubulin small complex (gamma-TuSC) involved in microtubule nucleation for the formation of median bodies and in the biogenesis of flagella. Gamma-TuSC may be required for the correct positioning of EB1 within the trophozoites. This chain is Tubulin gamma chain, found in Giardia intestinalis (strain ATCC 50803 / WB clone C6) (Giardia lamblia).